Reading from the N-terminus, the 330-residue chain is Tryptophan--tRNA ligase (330 aa).

ATP-binding positions include 10–12 (QTT) and 18–19 (GN). A 'HIGH' region motif is present at residues 11 to 19 (TTGALHLGN). Aspartate 134 is a binding site for L-tryptophan. Residues 146-148 (GED), isoleucine 186, and 195-199 (KMSKS) each bind ATP. A 'KMSKS' region motif is present at residues 195–199 (KMSKS).

This sequence belongs to the class-I aminoacyl-tRNA synthetase family. Homodimer.

The protein resides in the cytoplasm. It carries out the reaction tRNA(Trp) + L-tryptophan + ATP = L-tryptophyl-tRNA(Trp) + AMP + diphosphate + H(+). In terms of biological role, catalyzes the attachment of tryptophan to tRNA(Trp). This chain is Tryptophan--tRNA ligase, found in Rickettsia typhi (strain ATCC VR-144 / Wilmington).